Reading from the N-terminus, the 535-residue chain is Glucans biosynthesis protein D 1 (535 aa).

The tat-type signal signal peptide spans 1-28 (MHRRDLLKQLAAGFLALAPGLTPSTASA). The tract at residues 275 to 287 (RTDRAGDRQSAAR) is insert.

The protein belongs to the OpgD/OpgG family. Predicted to be exported by the Tat system. The position of the signal peptide cleavage has not been experimentally proven.

The protein resides in the periplasm. Its pathway is glycan metabolism; osmoregulated periplasmic glucan (OPG) biosynthesis. In terms of biological role, probably involved in the control of the structural glucose backbone of osmoregulated periplasmic glucans (OPGs). The chain is Glucans biosynthesis protein D 1 (opgD1) from Ralstonia nicotianae (strain ATCC BAA-1114 / GMI1000) (Ralstonia solanacearum).